The primary structure comprises 334 residues: Ornithine carbamoyltransferase (334 aa).

Residues 57–60, Gln84, Arg108, and 135–138 each bind carbamoyl phosphate; these read STRT and HPTQ. L-ornithine is bound by residues Asn168, Asp232, and 236-237; that span reads SM. Residues 274 to 275 and Arg321 each bind carbamoyl phosphate; that span reads CL.

The protein belongs to the aspartate/ornithine carbamoyltransferase superfamily. OTCase family.

The protein resides in the cytoplasm. It carries out the reaction carbamoyl phosphate + L-ornithine = L-citrulline + phosphate + H(+). It functions in the pathway amino-acid degradation; L-arginine degradation via ADI pathway; carbamoyl phosphate from L-arginine: step 2/2. Its function is as follows. Reversibly catalyzes the transfer of the carbamoyl group from carbamoyl phosphate (CP) to the N(epsilon) atom of ornithine (ORN) to produce L-citrulline. This is Ornithine carbamoyltransferase from Haemophilus influenzae (strain PittGG).